Reading from the N-terminus, the 464-residue chain is Protein FAM90A24 (464 aa).

Disordered stretches follow at residues 1-42 (MMAR…DPRL), 69-389 (VPAT…HDGA), and 415-437 (HSPE…SEAP). Basic and acidic residues-rich tracts occupy residues 74–89 (GKKE…KPRG) and 97–114 (NKDK…DPQR). Residues 180 to 197 (LASLSPLRKASLSSSSSL) are compositionally biased toward low complexity.

The protein belongs to the FAM90 family.

The protein is Protein FAM90A24 of Homo sapiens (Human).